The sequence spans 776 residues: 5-methyltetrahydropteroyltriglutamate--homocysteine methyltransferase (776 aa).

Residues 16–19 (RELK) and lysine 112 contribute to the 5-methyltetrahydropteroyltri-L-glutamate site. L-homocysteine is bound by residues 435 to 437 (IGS) and glutamate 488. L-methionine is bound by residues 435–437 (IGS) and glutamate 488. 5-methyltetrahydropteroyltri-L-glutamate contacts are provided by residues 519–520 (RC) and tryptophan 565. Residue aspartate 603 coordinates L-homocysteine. Aspartate 603 serves as a coordination point for L-methionine. Residue glutamate 609 participates in 5-methyltetrahydropteroyltri-L-glutamate binding. Zn(2+) is bound by residues histidine 645, cysteine 647, and glutamate 669. Histidine 698 functions as the Proton donor in the catalytic mechanism. Cysteine 730 lines the Zn(2+) pocket.

This sequence belongs to the vitamin-B12 independent methionine synthase family. Requires Zn(2+) as cofactor.

The catalysed reaction is 5-methyltetrahydropteroyltri-L-glutamate + L-homocysteine = tetrahydropteroyltri-L-glutamate + L-methionine. It functions in the pathway amino-acid biosynthesis; L-methionine biosynthesis via de novo pathway; L-methionine from L-homocysteine (MetE route): step 1/1. Its function is as follows. Catalyzes the transfer of a methyl group from 5-methyltetrahydrofolate to homocysteine resulting in methionine formation. This chain is 5-methyltetrahydropteroyltriglutamate--homocysteine methyltransferase, found in Ralstonia pickettii (strain 12J).